Here is a 120-residue protein sequence, read N- to C-terminus: Chaperonin GroEL (120 aa).

Residue 23–27 participates in ATP binding; the sequence is DGTTT.

It belongs to the chaperonin (HSP60) family. As to quaternary structure, forms a cylinder of 14 subunits composed of two heptameric rings stacked back-to-back. Interacts with the co-chaperonin GroES.

The protein resides in the cytoplasm. It carries out the reaction ATP + H2O + a folded polypeptide = ADP + phosphate + an unfolded polypeptide.. Functionally, together with its co-chaperonin GroES, plays an essential role in assisting protein folding. The GroEL-GroES system forms a nano-cage that allows encapsulation of the non-native substrate proteins and provides a physical environment optimized to promote and accelerate protein folding. The sequence is that of Chaperonin GroEL from Mycobacterium asiaticum.